The primary structure comprises 193 residues: Probable oligoribonuclease (193 aa).

In terms of domain architecture, Exonuclease spans 15–177; the sequence is IIWIDCEMTG…DDIMESIAEL (163 aa). Residue Tyr136 is part of the active site.

This sequence belongs to the oligoribonuclease family.

In terms of biological role, 3'-to-5' exoribonuclease specific for small oligoribonucleotides. In Caenorhabditis elegans, this protein is Probable oligoribonuclease.